The chain runs to 89 residues: Small ribosomal subunit protein uS15 (89 aa).

It belongs to the universal ribosomal protein uS15 family. As to quaternary structure, part of the 30S ribosomal subunit. Forms a bridge to the 50S subunit in the 70S ribosome, contacting the 23S rRNA.

Functionally, one of the primary rRNA binding proteins, it binds directly to 16S rRNA where it helps nucleate assembly of the platform of the 30S subunit by binding and bridging several RNA helices of the 16S rRNA. Its function is as follows. Forms an intersubunit bridge (bridge B4) with the 23S rRNA of the 50S subunit in the ribosome. The chain is Small ribosomal subunit protein uS15 from Bifidobacterium adolescentis (strain ATCC 15703 / DSM 20083 / NCTC 11814 / E194a).